We begin with the raw amino-acid sequence, 750 residues long: MMRQYELVERVQRYKPDVNEALLNKAYVYAMQKHRSQKRASGDPYFSHPLEVAAILTDMHLDEATIAIALLHDTIEDTTATRQEIDQLFGPEIGKLVEGLTKLKKLDLVSKKAVQAENLRKLLLAISEDVRVLLVKLADRLHNMRTLGVMREDKRLRIAEETMDIYAPLAGRMGMQDMREELEELAFRYINPDAWRAVTDRLAELLEKNRGLLQKIETDLSEIFEKNGIKASVKSRQKKPWSVFRKMESKGLSFEQLSDIFGFRVMVDTVQDCYRALGLIHTTWSMVPGRFKDYISTPKQNDYRSIHTTIIGPSRQRIELQIRTREMDEIAEFGVAAHSIYKDRGSANNPHKISTETNAYAWLRQTIEQLSEGDNPEEFLEHTKLELFQDQVFCFTPKGRLIALPRGATPIDFAYAVHTDIGDSCVGAKVNGRIMPLMTELKNGDEVDIIRSKAQVPPAAWESLVATGKARAAIRRATRSAVRKQYSGLGMRILERAFERAGKPFSKDILKPGLPRLARKDVEDVLAAVGRGELPSTDVVKAVYPDYQDTRVTTQNNPAKAGEKGWFNIQNAAGMIFKVPEGGEGAAAKVDPAATTPKPGKRALPIRGTNPDLPVRFAPEGAVPGDRIVGILQPGAGITIYPIQSPALTAYDDQPERWIDVRWDIDDQMSERFPARISVSAINSPGSLAEIAQIAAANDANIHNLSMVRTAPDFTEMIIDVEVWDLKHLNRIISQLKESASVSSAKRVNG.

Residues 45-144 (YFSHPLEVAA…VKLADRLHNM (100 aa)) form the HD domain. The 62-residue stretch at 390–451 (DQVFCFTPKG…KNGDEVDIIR (62 aa)) folds into the TGS domain. The disordered stretch occupies residues 587-613 (AAKVDPAATTPKPGKRALPIRGTNPDL). An ACT domain is found at 676–750 (RISVSAINSP…SVSSAKRVNG (75 aa)).

The protein belongs to the RelA/SpoT family.

It carries out the reaction GTP + ATP = guanosine 3'-diphosphate 5'-triphosphate + AMP. Functions as a (p)ppGpp synthase. In eubacteria ppGpp (guanosine 3'-diphosphate 5'-diphosphate) is a mediator of the stringent response that coordinates a variety of cellular activities in response to changes in nutritional abundance. It is necessary for persistence in mice, essential for intracellular growth of Brucella and required for expression of the type IV secretion system VirB and therefore plays a role in adaptation of Brucella to its intracellular host environment. This Brucella melitensis biotype 1 (strain ATCC 23456 / CCUG 17765 / NCTC 10094 / 16M) protein is GTP pyrophosphokinase rsh (rsh).